We begin with the raw amino-acid sequence, 330 residues long: DNA-directed RNA polymerase subunit alpha (330 aa).

The segment at 1-232 (MAILAFQKPD…YHFMLFSDEK (232 aa)) is alpha N-terminal domain (alpha-NTD). The alpha C-terminal domain (alpha-CTD) stretch occupies residues 248–330 (EEVLHMRQLL…DISKYKLDKE (83 aa)).

Belongs to the RNA polymerase alpha chain family. As to quaternary structure, homodimer. The RNAP catalytic core consists of 2 alpha, 1 beta, 1 beta' and 1 omega subunit. When a sigma factor is associated with the core the holoenzyme is formed, which can initiate transcription.

It catalyses the reaction RNA(n) + a ribonucleoside 5'-triphosphate = RNA(n+1) + diphosphate. DNA-dependent RNA polymerase catalyzes the transcription of DNA into RNA using the four ribonucleoside triphosphates as substrates. The protein is DNA-directed RNA polymerase subunit alpha of Bacteroides fragilis (strain ATCC 25285 / DSM 2151 / CCUG 4856 / JCM 11019 / LMG 10263 / NCTC 9343 / Onslow / VPI 2553 / EN-2).